The sequence spans 168 residues: UPF0303 protein YE1367 (168 aa).

It belongs to the UPF0303 family.

The protein is UPF0303 protein YE1367 of Yersinia enterocolitica serotype O:8 / biotype 1B (strain NCTC 13174 / 8081).